Consider the following 299-residue polypeptide: 4-diphosphocytidyl-2-C-methyl-D-erythritol kinase (299 aa).

Residue K18 is part of the active site. Residue 104–114 (PIASGIGGGSS) participates in ATP binding. D146 is a catalytic residue.

It belongs to the GHMP kinase family. IspE subfamily.

The catalysed reaction is 4-CDP-2-C-methyl-D-erythritol + ATP = 4-CDP-2-C-methyl-D-erythritol 2-phosphate + ADP + H(+). Its pathway is isoprenoid biosynthesis; isopentenyl diphosphate biosynthesis via DXP pathway; isopentenyl diphosphate from 1-deoxy-D-xylulose 5-phosphate: step 3/6. Functionally, catalyzes the phosphorylation of the position 2 hydroxy group of 4-diphosphocytidyl-2C-methyl-D-erythritol. The sequence is that of 4-diphosphocytidyl-2-C-methyl-D-erythritol kinase from Brucella melitensis biotype 1 (strain ATCC 23456 / CCUG 17765 / NCTC 10094 / 16M).